The chain runs to 59 residues: Protein translocase subunit SecE (59 aa).

Residues 37–57 form a helical membrane-spanning segment; the sequence is LIVLLFVGLLAFLVQLAFSIL.

It belongs to the SecE/SEC61-gamma family. In terms of assembly, component of the Sec protein translocase complex. Heterotrimer consisting of SecY (alpha), SecG (beta) and SecE (gamma) subunits. The heterotrimers can form oligomers, although 1 heterotrimer is thought to be able to translocate proteins. Interacts with the ribosome. May interact with SecDF, and other proteins may be involved.

The protein localises to the cell membrane. Its function is as follows. Essential subunit of the Sec protein translocation channel SecYEG. Clamps together the 2 halves of SecY. May contact the channel plug during translocation. This is Protein translocase subunit SecE from Metallosphaera sedula (strain ATCC 51363 / DSM 5348 / JCM 9185 / NBRC 15509 / TH2).